The chain runs to 262 residues: MQTRHRAKKSLGQNFLQDANIARKIVDSLKITENDSIIEIGPGQGALTKFILEAGPESLTLVEKDRDLAPALEAEYPEARVELEDALKFDWAGLDPDRNWKIVGNLPYNVASKIMWDIAAQCNATCVFMVQHEVAQRVTSGPGSKKYGAISVWIQSFCRTDYLFKVPPTVFKPKPKVDSAVIKFFPLPEEEKPSDIEGLAKLVKYCFQYRRKQLGKILKSFISDAVIQWAEKEGVSLTDRPEALSPLQFQSLYKSVKNDFPS.

Positions 14, 16, 41, 63, 85, and 105 each coordinate S-adenosyl-L-methionine.

It belongs to the class I-like SAM-binding methyltransferase superfamily. rRNA adenine N(6)-methyltransferase family. RsmA subfamily.

The protein resides in the cytoplasm. It carries out the reaction adenosine(1518)/adenosine(1519) in 16S rRNA + 4 S-adenosyl-L-methionine = N(6)-dimethyladenosine(1518)/N(6)-dimethyladenosine(1519) in 16S rRNA + 4 S-adenosyl-L-homocysteine + 4 H(+). Specifically dimethylates two adjacent adenosines (A1518 and A1519) in the loop of a conserved hairpin near the 3'-end of 16S rRNA in the 30S particle. May play a critical role in biogenesis of 30S subunits. The chain is Ribosomal RNA small subunit methyltransferase A from Maridesulfovibrio salexigens (strain ATCC 14822 / DSM 2638 / NCIMB 8403 / VKM B-1763) (Desulfovibrio salexigens).